Here is a 218-residue protein sequence, read N- to C-terminus: Holliday junction branch migration complex subunit RuvA (218 aa).

Residues 1 to 64 are domain I; sequence MIGKITGRLE…EDVMQLFGFT (64 aa). The domain II stretch occupies residues 65-143; sequence TLTEKEWHRL…SVMGMSDTQA (79 aa). A flexible linker region spans residues 144–164; sequence TVAAQSSDAVIETRAAPSPVV. Residues 165–218 form a domain III region; the sequence is QNPSAQAEALSALSNLGYAPGDAAAAVAQAAGELPDAETPDLIRAALKRLAPKG.

This sequence belongs to the RuvA family. In terms of assembly, homotetramer. Forms an RuvA(8)-RuvB(12)-Holliday junction (HJ) complex. HJ DNA is sandwiched between 2 RuvA tetramers; dsDNA enters through RuvA and exits via RuvB. An RuvB hexamer assembles on each DNA strand where it exits the tetramer. Each RuvB hexamer is contacted by two RuvA subunits (via domain III) on 2 adjacent RuvB subunits; this complex drives branch migration. In the full resolvosome a probable DNA-RuvA(4)-RuvB(12)-RuvC(2) complex forms which resolves the HJ.

Its subcellular location is the cytoplasm. The RuvA-RuvB-RuvC complex processes Holliday junction (HJ) DNA during genetic recombination and DNA repair, while the RuvA-RuvB complex plays an important role in the rescue of blocked DNA replication forks via replication fork reversal (RFR). RuvA specifically binds to HJ cruciform DNA, conferring on it an open structure. The RuvB hexamer acts as an ATP-dependent pump, pulling dsDNA into and through the RuvAB complex. HJ branch migration allows RuvC to scan DNA until it finds its consensus sequence, where it cleaves and resolves the cruciform DNA. The protein is Holliday junction branch migration complex subunit RuvA of Roseobacter denitrificans (strain ATCC 33942 / OCh 114) (Erythrobacter sp. (strain OCh 114)).